The following is a 221-amino-acid chain: Probable septum site-determining protein MinC (221 aa).

It belongs to the MinC family. As to quaternary structure, interacts with MinD and FtsZ.

In terms of biological role, cell division inhibitor that blocks the formation of polar Z ring septums. Rapidly oscillates between the poles of the cell to destabilize FtsZ filaments that have formed before they mature into polar Z rings. Prevents FtsZ polymerization. The chain is Probable septum site-determining protein MinC from Shewanella halifaxensis (strain HAW-EB4).